The sequence spans 61 residues: Alpha-conotoxin-like Tx1.2 (61 aa).

A signal peptide spans 1–20; sequence MFTVFLLVVLATTVVSFTSG. The propeptide occupies 21-42; that stretch reads RSTFRGRNAAAKASGLVSLTDR. 4-hydroxyproline is present on residues Pro-44 and Pro-50. 2 cysteine pairs are disulfide-bonded: Cys-46/Cys-52 and Cys-47/Cys-60. The segment at 48 to 50 is ser-Xaa-Pro motif, crucial for potent interaction with nAChR; the sequence is SHP.

Belongs to the conotoxin A superfamily. As to expression, expressed by the venom duct.

Its subcellular location is the secreted. In terms of biological role, alpha-conotoxins act on postsynaptic membranes, they bind to the nicotinic acetylcholine receptors (nAChR) and thus inhibit them. This toxin also inhibits high voltage-activated (HVA) calcium channel currents in rat DRG neurons (8% inhibition at 1 uM toxin) probably by activating GABA(B) receptors (GABBR1 and/or GABBR2). This is Alpha-conotoxin-like Tx1.2 from Conus textile (Cloth-of-gold cone).